The following is a 249-amino-acid chain: Aliphatic sulfonates import ATP-binding protein SsuB 2 (249 aa).

In terms of domain architecture, ABC transporter spans 5–233 (LDLLEIRKAY…PRDRRAVELA (229 aa)). 37-44 (GPSGCGKS) provides a ligand contact to ATP.

This sequence belongs to the ABC transporter superfamily. Aliphatic sulfonates importer (TC 3.A.1.17.2) family. As to quaternary structure, the complex is composed of two ATP-binding proteins (SsuB), two transmembrane proteins (SsuC) and a solute-binding protein (SsuA).

The protein localises to the cell inner membrane. It carries out the reaction ATP + H2O + aliphatic sulfonate-[sulfonate-binding protein]Side 1 = ADP + phosphate + aliphatic sulfonateSide 2 + [sulfonate-binding protein]Side 1.. In terms of biological role, part of the ABC transporter complex SsuABC involved in aliphatic sulfonates import. Responsible for energy coupling to the transport system. The polypeptide is Aliphatic sulfonates import ATP-binding protein SsuB 2 (Pseudomonas aeruginosa (strain ATCC 15692 / DSM 22644 / CIP 104116 / JCM 14847 / LMG 12228 / 1C / PRS 101 / PAO1)).